A 435-amino-acid polypeptide reads, in one-letter code: 3-phosphoshikimate 1-carboxyvinyltransferase (435 aa).

The 3-phosphoshikimate site is built by Lys-22, Ser-23, and Arg-27. Phosphoenolpyruvate is bound at residue Lys-22. Phosphoenolpyruvate-binding residues include Gly-94 and Arg-122. 4 residues coordinate 3-phosphoshikimate: Ser-166, Gln-168, Asp-314, and Lys-341. Gln-168 contributes to the phosphoenolpyruvate binding site. Asp-314 functions as the Proton acceptor in the catalytic mechanism. Phosphoenolpyruvate-binding residues include Arg-345 and Arg-388.

It belongs to the EPSP synthase family. In terms of assembly, monomer.

It localises to the cytoplasm. The catalysed reaction is 3-phosphoshikimate + phosphoenolpyruvate = 5-O-(1-carboxyvinyl)-3-phosphoshikimate + phosphate. Its pathway is metabolic intermediate biosynthesis; chorismate biosynthesis; chorismate from D-erythrose 4-phosphate and phosphoenolpyruvate: step 6/7. Its function is as follows. Catalyzes the transfer of the enolpyruvyl moiety of phosphoenolpyruvate (PEP) to the 5-hydroxyl of shikimate-3-phosphate (S3P) to produce enolpyruvyl shikimate-3-phosphate and inorganic phosphate. The protein is 3-phosphoshikimate 1-carboxyvinyltransferase of Vesicomyosocius okutanii subsp. Calyptogena okutanii (strain HA).